Reading from the N-terminus, the 102-residue chain is Small ribosomal subunit protein uS10 (102 aa).

Belongs to the universal ribosomal protein uS10 family. In terms of assembly, part of the 30S ribosomal subunit.

In terms of biological role, involved in the binding of tRNA to the ribosomes. The chain is Small ribosomal subunit protein uS10 from Coprothermobacter proteolyticus (strain ATCC 35245 / DSM 5265 / OCM 4 / BT).